A 165-amino-acid chain; its full sequence is Ubiquitin-conjugating enzyme E2 G2 (165 aa).

Residue Ala-2 is modified to N-acetylalanine. A UBC core domain is found at Thr-4–Gly-164. Cys-89 serves as the catalytic Glycyl thioester intermediate.

This sequence belongs to the ubiquitin-conjugating enzyme family. As to quaternary structure, interacts with AUP1 (via C-terminus); the interaction recruits UBE2G2 to lipid droplets. Interacts with ubiquitin ligases AMFR/gp78 and RNF139/TRC8; recruitment to lipid droplets by AUP1 facilitates interaction of UBE2G2 with AMFR and RNF139, leading to sterol-induced ubiquitination of 3-hydroxy-3-methylglutaryl coenzyme A reductase and its subsequent proteasomal degradation.

The protein localises to the endoplasmic reticulum. Its subcellular location is the lipid droplet. It catalyses the reaction S-ubiquitinyl-[E1 ubiquitin-activating enzyme]-L-cysteine + [E2 ubiquitin-conjugating enzyme]-L-cysteine = [E1 ubiquitin-activating enzyme]-L-cysteine + S-ubiquitinyl-[E2 ubiquitin-conjugating enzyme]-L-cysteine.. Its pathway is protein modification; protein ubiquitination. Accepts ubiquitin from the E1 complex and catalyzes its covalent attachment to other proteins. In vitro catalyzes 'Lys-48'-linked polyubiquitination. Involved in endoplasmic reticulum-associated degradation (ERAD). Required for sterol-induced ubiquitination of 3-hydroxy-3-methylglutaryl coenzyme A reductase and its subsequent proteasomal degradation. The sequence is that of Ubiquitin-conjugating enzyme E2 G2 from Bos taurus (Bovine).